A 418-amino-acid chain; its full sequence is ML-236A carboxylate methylbutanoyltransferase mlcH (418 aa).

Arg78 is a monacolin J binding site. The Acyl-ester intermediate role is filled by Ser81. Residues Arg178, Tyr193, and Tyr262 each contribute to the monacolin J site. Gly370 serves as a coordination point for 2-methylbutanoate.

It belongs to the class-A beta-lactamase family.

It carries out the reaction ML-236A carboxylate + (S)-2-methylbutanoyl-[2-methylbutanoate polyketide synthase] = mevinic carboxylate + holo-[2-methylbutanoate polyketide synthase]. Its pathway is polyketide biosynthesis. Functionally, compactin diketide synthase; part of the gene cluster that mediates the biosynthesis of compactin, also known as mevastatin or ML-236B, and which acts as a potent competitive inhibitor of HMG-CoA reductase. Compactin biosynthesis is performed in two stages. The first stage is catalyzed by the nonaketide synthase mlcA, which belongs to type I polyketide synthases and catalyzes the iterative nine-step formation of the polyketide. This PKS stage is completed by the action of dehydrogenase mlcG, which catalyzes the NADPH-dependent reduction of the unsaturated tetra-, penta- and heptaketide intermediates that arise during the mlcA-mediated biosynthesis of the nonaketide chain and leads to dihydro-ML-236C carboxylate. Covalently bound dihydro-ML-236C carboxylate is released from mlcA by the mlcF esterase. Conversion of dihydro-ML-236C carboxylate into ML-236A carboxylate is subsequently performed with the participation of molecular oxygen and P450 monoogygenase mlcC. Finally, mlcH performs the conversion of ML-236A carboxylate to ML-236B/compactin carboxylate through the addition of the side-chain diketide moiety produced by the diketide synthase mlcB. This Penicillium citrinum protein is ML-236A carboxylate methylbutanoyltransferase mlcH.